The sequence spans 302 residues: Sulfate adenylyltransferase subunit 2 (302 aa).

Belongs to the PAPS reductase family. CysD subfamily. Heterodimer composed of CysD, the smaller subunit, and CysN.

It carries out the reaction sulfate + ATP + H(+) = adenosine 5'-phosphosulfate + diphosphate. Its pathway is sulfur metabolism; hydrogen sulfide biosynthesis; sulfite from sulfate: step 1/3. In terms of biological role, with CysN forms the ATP sulfurylase (ATPS) that catalyzes the adenylation of sulfate producing adenosine 5'-phosphosulfate (APS) and diphosphate, the first enzymatic step in sulfur assimilation pathway. APS synthesis involves the formation of a high-energy phosphoric-sulfuric acid anhydride bond driven by GTP hydrolysis by CysN coupled to ATP hydrolysis by CysD. The polypeptide is Sulfate adenylyltransferase subunit 2 (Erwinia tasmaniensis (strain DSM 17950 / CFBP 7177 / CIP 109463 / NCPPB 4357 / Et1/99)).